Here is a 449-residue protein sequence, read N- to C-terminus: Heterogeneous nuclear ribonucleoprotein H2 (449 aa).

Methionine 1 carries the N-acetylmethionine modification. At methionine 2 the chain carries N-acetylmethionine; in Heterogeneous nuclear ribonucleoprotein H2, N-terminally processed. The region spanning 11–90 (FVVKVRGLPW…RYVEVFKSNS (80 aa)) is the RRM 1 domain. Serine 23 is subject to Phosphoserine. A Glycyl lysine isopeptide (Lys-Gly) (interchain with G-Cter in SUMO2) cross-link involves residue lysine 35. A phosphoserine mark is found at serine 54 and serine 63. Lysine 87 is covalently cross-linked (Glycyl lysine isopeptide (Lys-Gly) (interchain with G-Cter in SUMO2)). Serine 90 is subject to Phosphoserine. Lysine 98 participates in a covalent cross-link: Glycyl lysine isopeptide (Lys-Gly) (interchain with G-Cter in SUMO2). Positions 111 to 188 (GFVRLRGLPF…RYIEIFKSSR (78 aa)) constitute an RRM 2 domain. A Dimethylated arginine; alternate modification is found at arginine 233. The residue at position 233 (arginine 233) is an Omega-N-methylarginine; alternate. The 1-1 repeat unit spans residues 234–249 (GAYGGGYGGYDDYGGY). The tract at residues 234–433 (GAYGGGYGGY…YGGQSSMSGY (200 aa)) is 2 X 16 AA Gly-rich approximate repeats. Tyrosine 246 is modified (phosphotyrosine). The 76-residue stretch at 289–364 (HCVHMRGLPY…RYVELFLNST (76 aa)) folds into the RRM 3 domain. The residue at position 310 (serine 310) is a Phosphoserine. 3 repeat units span residues 354 to 372 (HRYV…GGAY), 374 to 392 (HSYV…GGAY), and 418 to 433 (AGYG…MSGY). Positions 354–392 (HRYVELFLNSTAGTSGGAYDHSYVELFLNSTAGASGGAY) are 2 X 19 AA perfect repeats.

In terms of assembly, component of a ribonucleoprotein complex containing mRNAs and RNA-binding proteins including DDX5, HNRNPH2 and SRSF1 as well as splicing regulator ARVCF. Interacts with TXNL4/DIM1.

The protein localises to the nucleus. It localises to the nucleoplasm. Functionally, this protein is a component of the heterogeneous nuclear ribonucleoprotein (hnRNP) complexes which provide the substrate for the processing events that pre-mRNAs undergo before becoming functional, translatable mRNAs in the cytoplasm. Binds poly(RG). The sequence is that of Heterogeneous nuclear ribonucleoprotein H2 (Hnrnph2) from Rattus norvegicus (Rat).